Here is a 133-residue protein sequence, read N- to C-terminus: Large-conductance mechanosensitive channel (133 aa).

A run of 3 helical transmembrane segments spans residues 8–28, 30–50, and 73–93; these read FAMK…GAFG, IVTS…LGGI, and GQFI…FLFI.

This sequence belongs to the MscL family. In terms of assembly, homopentamer.

The protein resides in the cell membrane. Functionally, channel that opens in response to stretch forces in the membrane lipid bilayer. May participate in the regulation of osmotic pressure changes within the cell. The chain is Large-conductance mechanosensitive channel from Hathewaya histolytica (Clostridium histolyticum).